A 314-amino-acid chain; its full sequence is Periplasmic [NiFe] hydrogenase small subunit (314 aa).

Residues Met-1 to Glu-49 constitute a signal peptide (tat-type signal). [4Fe-4S] cluster is bound by residues Cys-67, Cys-70, Cys-164, Cys-197, His-234, Cys-237, Cys-262, and Cys-268. [3Fe-4S] cluster-binding residues include Cys-277, Cys-295, and Cys-298.

It belongs to the [NiFe]/[NiFeSe] hydrogenase small subunit family. As to quaternary structure, heterodimer of a large and a small subunit. It depends on [4Fe-4S] cluster as a cofactor. [3Fe-4S] cluster is required as a cofactor. Predicted to be exported by the Tat system. The position of the signal peptide cleavage has been experimentally proven.

The protein localises to the periplasm. It catalyses the reaction 2 Fe(III)-[cytochrome c3] + H2 = 2 Fe(II)-[cytochrome c3] + 2 H(+). Functionally, involved in hydrogen uptake for the anaerobic reduction of sulfate to hydrogen sulfide in an electron transport chain. Cytochrome c3 is the physiological electron acceptor. In Solidesulfovibrio fructosivorans (Desulfovibrio fructosivorans), this protein is Periplasmic [NiFe] hydrogenase small subunit (hydA).